The sequence spans 180 residues: Cytokinin-beta-glucosidase (180 aa).

Accumulates in young leaves and shoot tips.

Functionally, hydrolyzes cytokinin glucosides thus liberating free cytokinins. In Nicotiana tabacum (Common tobacco), this protein is Cytokinin-beta-glucosidase (TROLC).